The sequence spans 226 residues: ATP synthase F(0) complex subunit a (226 aa).

The next 6 helical transmembrane spans lie at 11-31 (APTILGQPATIPIIMFPTLLI), 68-88 (WSLMLMSLITFITMTNLLGLL), 97-117 (QLSMNLAMAIPLWAGTIITGL), 138-158 (IPMLVMIETISLLIQPMALAV), 164-184 (ITAGHLLMHLIGNTMLTLSTI), and 194-214 (VLLMLLTILEIAVALIQAYVF).

This sequence belongs to the ATPase A chain family. As to quaternary structure, component of the ATP synthase complex composed at least of ATP5F1A/subunit alpha, ATP5F1B/subunit beta, ATP5MC1/subunit c (homooctomer), MT-ATP6/subunit a, MT-ATP8/subunit 8, ATP5ME/subunit e, ATP5MF/subunit f, ATP5MG/subunit g, ATP5MK/subunit k, ATP5MJ/subunit j, ATP5F1C/subunit gamma, ATP5F1D/subunit delta, ATP5F1E/subunit epsilon, ATP5PF/subunit F6, ATP5PB/subunit b, ATP5PD/subunit d, ATP5PO/subunit OSCP. ATP synthase complex consists of a soluble F(1) head domain (subunits alpha(3) and beta(3)) - the catalytic core - and a membrane F(0) domain - the membrane proton channel (subunits c, a, 8, e, f, g, k and j). These two domains are linked by a central stalk (subunits gamma, delta, and epsilon) rotating inside the F1 region and a stationary peripheral stalk (subunits F6, b, d, and OSCP). Interacts with DNAJC30; interaction is direct.

Its subcellular location is the mitochondrion inner membrane. The catalysed reaction is H(+)(in) = H(+)(out). Subunit a, of the mitochondrial membrane ATP synthase complex (F(1)F(0) ATP synthase or Complex V) that produces ATP from ADP in the presence of a proton gradient across the membrane which is generated by electron transport complexes of the respiratory chain. ATP synthase complex consist of a soluble F(1) head domain - the catalytic core - and a membrane F(1) domain - the membrane proton channel. These two domains are linked by a central stalk rotating inside the F(1) region and a stationary peripheral stalk. During catalysis, ATP synthesis in the catalytic domain of F(1) is coupled via a rotary mechanism of the central stalk subunits to proton translocation. With the subunit c (ATP5MC1), forms the proton-conducting channel in the F(0) domain, that contains two crucial half-channels (inlet and outlet) that facilitate proton movement from the mitochondrial intermembrane space (IMS) into the matrix. Protons are taken up via the inlet half-channel and released through the outlet half-channel, following a Grotthuss mechanism. This is ATP synthase F(0) complex subunit a from Papio hamadryas (Hamadryas baboon).